The following is a 257-amino-acid chain: Tryptophan synthase alpha chain (257 aa).

Catalysis depends on proton acceptor residues E44 and D55.

Belongs to the TrpA family. In terms of assembly, tetramer of two alpha and two beta chains.

It catalyses the reaction (1S,2R)-1-C-(indol-3-yl)glycerol 3-phosphate + L-serine = D-glyceraldehyde 3-phosphate + L-tryptophan + H2O. The protein operates within amino-acid biosynthesis; L-tryptophan biosynthesis; L-tryptophan from chorismate: step 5/5. Its function is as follows. The alpha subunit is responsible for the aldol cleavage of indoleglycerol phosphate to indole and glyceraldehyde 3-phosphate. The protein is Tryptophan synthase alpha chain of Chlamydia felis (strain Fe/C-56) (Chlamydophila felis).